The sequence spans 353 residues: 3-isopropylmalate dehydrogenase (353 aa).

Position 73–86 (73–86 (GPQYDTLDRPLRPE)) interacts with NAD(+). Substrate-binding residues include Arg-93, Arg-103, Arg-131, and Asp-220. Residues Asp-220, Asp-244, and Asp-248 each contribute to the Mg(2+) site. 278 to 290 (GSAPDIAGKNLAN) serves as a coordination point for NAD(+).

This sequence belongs to the isocitrate and isopropylmalate dehydrogenases family. LeuB type 1 subfamily. In terms of assembly, homodimer. The cofactor is Mg(2+). Requires Mn(2+) as cofactor.

It localises to the cytoplasm. The enzyme catalyses (2R,3S)-3-isopropylmalate + NAD(+) = 4-methyl-2-oxopentanoate + CO2 + NADH. The protein operates within amino-acid biosynthesis; L-leucine biosynthesis; L-leucine from 3-methyl-2-oxobutanoate: step 3/4. In terms of biological role, catalyzes the oxidation of 3-carboxy-2-hydroxy-4-methylpentanoate (3-isopropylmalate) to 3-carboxy-4-methyl-2-oxopentanoate. The product decarboxylates to 4-methyl-2 oxopentanoate. This chain is 3-isopropylmalate dehydrogenase, found in Thiobacillus denitrificans (strain ATCC 25259 / T1).